The primary structure comprises 422 residues: Exodeoxyribonuclease 7 large subunit (422 aa).

It belongs to the XseA family. In terms of assembly, heterooligomer composed of large and small subunits.

The protein resides in the cytoplasm. It carries out the reaction Exonucleolytic cleavage in either 5'- to 3'- or 3'- to 5'-direction to yield nucleoside 5'-phosphates.. Functionally, bidirectionally degrades single-stranded DNA into large acid-insoluble oligonucleotides, which are then degraded further into small acid-soluble oligonucleotides. The polypeptide is Exodeoxyribonuclease 7 large subunit (Leptospira borgpetersenii serovar Hardjo-bovis (strain JB197)).